The primary structure comprises 211 residues: Ferritin heavy chain (211 aa).

The signal sequence occupies residues 1–20; the sequence is MKAVLFAVAALLAVCIPISA. The 157-residue stretch at 35–191 folds into the Ferritin-like diiron domain; it reads ITMQQSCRGS…GKASTLKKML (157 aa). Cysteines 41 and 150 form a disulfide. Residues Glu52, Glu87, His90, Glu136, and Gln173 each contribute to the Fe cation site.

This sequence belongs to the ferritin family. Oligomer of 12 light (L) chains and 12 heavy (H) chains; L and H chains are disulfide-linked. The functional molecule forms a roughly spherical shell with a diameter of 12 nm and contains a central cavity into which the insoluble ferric iron core is deposited.

The protein localises to the golgi apparatus. It is found in the secreted. The enzyme catalyses 4 Fe(2+) + O2 + 4 H(+) = 4 Fe(3+) + 2 H2O. Stores iron in a soluble, non-toxic, readily available form. Important for iron homeostasis. Iron is taken up in the ferrous form and deposited as ferric hydroxides after oxidation. Ferritin is composed of a heavy (H) chain which is responsible for the oxidation and uptake of ferrous iron, and a light (L) chain which facilitates the nucleation of the ferrihydrite iron core. In Papilio xuthus (Asian swallowtail butterfly), this protein is Ferritin heavy chain.